The following is a 489-amino-acid chain: Hyaluronoglucuronidase (489 aa).

Glu-176 functions as the Proton donor in the catalytic mechanism. The active-site Nucleophile is Glu-290.

The protein belongs to the glycosyl hydrolase 79 family.

It carries out the reaction Random hydrolysis of (1-&gt;3)-linkages between beta-D-glucuronate and N-acetyl-D-glucosamine residues in hyaluronate.. Hyaluronidase activity is inhibited by Mn(2+), Cu(2+) and Fe(3+). Its function is as follows. Hyaluronidase that mediates hydrolysis of (1-&gt;3)-linkages between beta-D-glucuronate and N-acetyl-D-glucosamine residues in hyaluronate. Very specific to hyaluronate: not able to hydrolyze chitin, heparin or chondroitin sulfate. This is Hyaluronoglucuronidase from Hirudo nipponia (Korean blood-sucking leech).